The chain runs to 931 residues: Protocadherin gamma-A4 (931 aa).

Residues 1 to 28 (MAAPPARPDHTRLLHICLLLGVLVEIRA) form the signal peptide. 6 Cadherin domains span residues 29-133 (EQIR…PPSF), 134-242 (GTEQ…APVF), 243-347 (TQPE…APEV), 348-452 (TVTS…PPTF), 453-567 (PHAS…YPTF), and 570-682 (DDST…KPSA). At 29 to 692 (EQIRYSVFEE…DPDDSGLTLY (664 aa)) the chain is on the extracellular side. 2 N-linked (GlcNAc...) asparagine glycosylation sites follow: asparagine 419 and asparagine 545. A helical membrane pass occupies residues 693-713 (LVVSVAAVSCVFLAFVTVLLA). The Cytoplasmic portion of the chain corresponds to 714 to 931 (LKLRRWHKSR…KKKSGKKEKK (218 aa)). 2 disordered regions span residues 801–840 (KGDP…WPNN) and 901–931 (ATLT…KEKK). The segment covering 805-840 (NLQQAPPNTDWRFSQAQRPGTSGSQNGDDTGTWPNN) has biased composition (polar residues). Basic residues predominate over residues 921 to 931 (NKKKSGKKEKK).

The protein resides in the cell membrane. Potential calcium-dependent cell-adhesion protein. May be involved in the establishment and maintenance of specific neuronal connections in the brain. This chain is Protocadherin gamma-A4 (PCDHGA4), found in Pan troglodytes (Chimpanzee).